The chain runs to 89 residues: Small ribosomal subunit protein uS15 (89 aa).

This sequence belongs to the universal ribosomal protein uS15 family. As to quaternary structure, part of the 30S ribosomal subunit. Forms a bridge to the 50S subunit in the 70S ribosome, contacting the 23S rRNA.

In terms of biological role, one of the primary rRNA binding proteins, it binds directly to 16S rRNA where it helps nucleate assembly of the platform of the 30S subunit by binding and bridging several RNA helices of the 16S rRNA. Its function is as follows. Forms an intersubunit bridge (bridge B4) with the 23S rRNA of the 50S subunit in the ribosome. The chain is Small ribosomal subunit protein uS15 from Shewanella denitrificans (strain OS217 / ATCC BAA-1090 / DSM 15013).